A 299-amino-acid chain; its full sequence is Kruppel-like factor 2 (299 aa).

2 disordered regions span residues Tyr-19–His-38 and Tyr-146–Lys-189. Residues His-23–His-38 show a composition bias toward basic residues. Residues Ser-153–Lys-180 are compositionally biased toward basic and acidic residues. 3 C2H2-type zinc fingers span residues His-198–His-222, Tyr-228–His-252, and Phe-258–His-280.

Belongs to the krueppel C2H2-type zinc-finger protein family. In terms of tissue distribution, expressed predominantly in intestine.

The protein localises to the nucleus. In terms of biological role, probable transcription factor which regulates lipid metabolism. The polypeptide is Kruppel-like factor 2 (Caenorhabditis elegans).